A 483-amino-acid polypeptide reads, in one-letter code: Altronate oxidoreductase (483 aa).

Residue 18–29 (IIQFGEGNFLRA) coordinates NAD(+).

The protein belongs to the mannitol dehydrogenase family. UxaB subfamily.

The catalysed reaction is D-altronate + NAD(+) = keto-D-tagaturonate + NADH + H(+). It functions in the pathway carbohydrate metabolism; pentose and glucuronate interconversion. The chain is Altronate oxidoreductase (uxaB) from Escherichia coli O157:H7.